The chain runs to 492 residues: Glycylpeptide N-tetradecanoyltransferase 2 (492 aa).

Positions 1–77 are disordered; sequence MAEDSESAAS…SASDSQEIKN (77 aa). Residues 15–32 show a composition bias toward acidic residues; that stretch reads ELDDQDTCGIDGDNEEEN. The segment covering 46–57 has biased composition (basic residues); sequence KKKKKKQKRKKE. Residues 61-72 show a composition bias toward polar residues; that stretch reads SGGTKSDSASDS. Tetradecanoyl-CoA contacts are provided by His-111, Trp-116, Leu-244, Val-246, Ser-252, Arg-254, Val-255, and Ala-256.

It belongs to the NMT family.

The protein resides in the cytoplasm. The protein localises to the membrane. It catalyses the reaction N-terminal glycyl-[protein] + tetradecanoyl-CoA = N-tetradecanoylglycyl-[protein] + CoA + H(+). The enzyme catalyses N-terminal glycyl-L-lysyl-[protein] + tetradecanoyl-CoA = N-terminal glycyl-(N(6)-tetradecanoyl)-L-lysyl-[protein] + CoA + H(+). In terms of biological role, adds a myristoyl group to the N-terminal glycine residue of certain cellular and viral proteins. Also able to mediate N-terminal lysine myristoylation of proteins. In Danio rerio (Zebrafish), this protein is Glycylpeptide N-tetradecanoyltransferase 2.